A 379-amino-acid polypeptide reads, in one-letter code: Stimulator of interferon genes protein (379 aa).

Transmembrane regions (helical) follow at residues 20-40 (VAAF…GEPS), 87-107 (ACLG…YFYV), and 115-135 (LPLT…ILLG). S-palmitoyl cysteine attachment occurs at residues cysteine 88 and cysteine 91. The tract at residues 153 to 340 (FNVAHGLAWS…KHLRQEEREE (188 aa)) is cyclic dinucleotide-binding domain (CBD). Positions 162, 167, 238, and 263 each coordinate 2',3'-cGAMP. Residues serine 162, tyrosine 167, 238 to 241 (RVYT), and threonine 263 contribute to the 3',3'-c-di-GMP site. Tyrosine 167, arginine 238, and threonine 263 together coordinate 2',3'-cUAMP. The tract at residues 340-379 (EVTMGTAGTFVAPGSSTLHQEPELLISGMDQPLPLRTDIF) is C-terminal tail (CTT). Position 355 is a phosphoserine (serine 355). Threonine 356 carries the phosphothreonine modification. The pLxIS motif motif lies at 363–366 (LLIS). Serine 366 bears the Phosphoserine; by TBK1 mark.

It belongs to the STING family. Homodimer; forms a homodimer in absence of cyclic nucleotide (c-di-GMP or cGAMP). Homotetramer; in presence of cyclic nucleotide (c-di-GMP or cGAMP), forms tetramers and higher-order oligomers through side-by-side packing. Interacts (when phosphorylated) with IRF3; following activation and phosphorylation on the pLxIS motif by TBK1, recruits IRF3. Interacts with TBK1; when homodimer, leading to subsequent production of IFN-beta. Interacts (via transmembrane domain) with TMEM203. Post-translationally, phosphorylation by TBK1 leads to activation and production of IFN-beta. Following cyclic nucleotide (c-di-GMP or cGAMP)-binding, activation and translocation from the endoplasmic reticulum, STING1 is phosphorylated by TBK1 at Ser-366 in the pLxIS motif. The phosphorylated pLxIS motif constitutes an IRF3-binding motif, leading to recruitment of the transcription factor IRF3 to induce type-I interferons and other cytokines. In contrast, lacks phosphorylation site at position 358, leading to reduced production of type-I interferons and other cytokines.

It localises to the endoplasmic reticulum membrane. It is found in the cytoplasm. The protein localises to the perinuclear region. Its subcellular location is the endoplasmic reticulum-Golgi intermediate compartment membrane. The protein resides in the golgi apparatus membrane. It localises to the cytoplasmic vesicle. It is found in the autophagosome membrane. The protein localises to the mitochondrion outer membrane. Its subcellular location is the cell membrane. It catalyses the reaction H(+)(in) = H(+)(out). Functionally, facilitator of innate immune signaling that acts as a sensor of cytosolic DNA from bacteria and viruses and promotes low production of type I interferon (IFN-alpha and IFN-beta). Compared to other mammals, STING1-dependent type I interferon induction is strongly reduced in bats, suggesting that the cGAS-STING pathway promotes a limited inflammatory response. Innate immune response is triggered in response to non-CpG double-stranded DNA from viruses and bacteria delivered to the cytoplasm. Acts by binding cyclic dinucleotides: recognizes and binds cyclic di-GMP (c-di-GMP), a second messenger produced by bacteria, cyclic UMP-AMP (2',3'-cUAMP), and cyclic GMP-AMP (cGAMP), a messenger produced by CGAS in response to DNA virus in the cytosol. Upon binding to c-di-GMP, cUAMP or cGAMP, STING1 oligomerizes, translocates from the endoplasmic reticulum and is phosphorylated by TBK1 on the pLxIS motif, leading to recruitment and subsequent activation of the transcription factor IRF3 to induce expression of type I interferon and exert a potent anti-viral state. In addition to promote the production of type I interferons, plays a direct role in autophagy. Following cGAMP-binding, STING1 buds from the endoplasmic reticulum into COPII vesicles, which then form the endoplasmic reticulum-Golgi intermediate compartment (ERGIC). The ERGIC serves as the membrane source for WIPI2 recruitment and LC3 lipidation, leading to formation of autophagosomes that target cytosolic DNA or DNA viruses for degradation by the lysosome. Promotes autophagy by acting as a proton channel that directs proton efflux from the Golgi to facilitate MAP1LC3B/LC3B lipidation. The autophagy- and interferon-inducing activities can be uncoupled and autophagy induction is independent of TBK1 phosphorylation. This chain is Stimulator of interferon genes protein, found in Eidolon helvum (Straw-colored fruit bat).